A 341-amino-acid chain; its full sequence is Oxidoreductase swnN (341 aa).

It belongs to the NmrA-type oxidoreductase family. Isoflavone reductase subfamily.

The protein operates within mycotoxin biosynthesis. Functionally, oxidoreductase; part of the gene cluster that mediates the biosynthesis of swainsonine (SW), a cytotoxic fungal alkaloid and a potential cancer therapy drug. Swainsonine production occurs via a multibranched pathway and is dispensable for fungal colonization of plants and infection of insect hosts. The first step of swainsonine biosynthesis is the production of the precursor pipecolic acid (PA) via conversion of L-lysine (Lys) to 1-piperideine-6-carboxylate (P6C) by the aminotransferase swnA, the latter being further reduced to PA by the reductase swnR. PA can be converted from lysine by both the SW biosynthetic cluster and the unclustered genes such as lysine cyclodeaminase. The PKS-NRPS hybrid synthetase swnK uptakes and condensates PA and malonyl-CoA with and without skipping of the ketoreductase (KR) domain in order to produce 3 intermediates, 1-oxoindolizidine, (1S)-1-hydroxyindolizin, and (1R)-1-hydroxyindolizine; with the transisomer (1S)-1-hydroxyindolizin being predominant. The terminal thioester reductase (TE) domain of swnK is involved in reduction of the thioester bond to release the intermediate aldehydes. The oxidoreductase swnN could contribute to the reduction of 1-oxoindolizidine to (1S)-1-hydroxyindolizin and (1R)-1-hydroxyindolizine, contributing to the major route of SW production. The dioxygenase swnH2 would be responsible for the oxidization of (1R)-1-hydroxyindolizine into (1R,2S)-1,2-dihydroxyindolizine and of (1S)-1-hydroxyindolizin to yield both (1R,2S)-1,2-dihydroxyindolizine and (1S,2S)-1,2-dihydroxyindolizine. The dioxygenase swnH1 then performs the conversion of the 1,2-dihydroxyindolizine epimers to SW. In Metarhizium robertsii (strain ARSEF 23 / ATCC MYA-3075) (Metarhizium anisopliae (strain ARSEF 23)), this protein is Oxidoreductase swnN.